A 499-amino-acid polypeptide reads, in one-letter code: Protein flp (499 aa).

A run of 4 helical transmembrane segments spans residues Leu6–Thr26, Phe389–Tyr409, Leu433–Leu453, and Leu471–Leu491.

Its subcellular location is the cell membrane. In terms of biological role, its precise function is unknown. Has no penicillin-binding activity and is not involved in methicillin resistance. The sequence is that of Protein flp (flp) from Staphylococcus aureus (strain MRSA252).